A 460-amino-acid chain; its full sequence is MNLVTSKPNVLLNPLFAQLGENRHVLVGFSGGLDSTVLLHLLVCLRQQLIPELNIRAIHIHHGLNPQADSWVKHCMQQCDQWKIELKVVRVNIDPRQNGIEAAARTARYQAFSANLAAKEVLLTAQHLDDQCETFLLALKRGSGPAGLSAMAAKMPFAHSQLLRPLLAFSREILENYAQAQQLQWIEDDSNQDDRFDRNFLRLNVLPILNQRWPHFAQATARSAGLCAEQEQLLDELLAENLQQLQGPDRSLSIDGLLQASMAKRAAILRRWLASLGAPMPSQSQLQRLWLEVAMARQDAEPQLMIGTRQVRRFRQHLYLLMPLAEITTNYLPWATVKAAPNSSIIPLLPEPLWLPADLGVLRFVSAGGQAVRPAAVGEEISVRFGLQGDIKIVGRHHSRQSKKVWQELGIPPWQRERIPLLYFGEQLIAAAGVFVTQAGQANENEPCWHLDWDKPLKLG.

30-35 (SGGLDS) is a binding site for ATP.

This sequence belongs to the tRNA(Ile)-lysidine synthase family.

It localises to the cytoplasm. The catalysed reaction is cytidine(34) in tRNA(Ile2) + L-lysine + ATP = lysidine(34) in tRNA(Ile2) + AMP + diphosphate + H(+). Functionally, ligates lysine onto the cytidine present at position 34 of the AUA codon-specific tRNA(Ile) that contains the anticodon CAU, in an ATP-dependent manner. Cytidine is converted to lysidine, thus changing the amino acid specificity of the tRNA from methionine to isoleucine. This Yersinia pseudotuberculosis serotype I (strain IP32953) protein is tRNA(Ile)-lysidine synthase.